Reading from the N-terminus, the 1031-residue chain is Protein draper (1031 aa).

The signal sequence occupies residues 1-16; the sequence is MLPVILIACLAQLVLA. At 17-800 the chain is on the extracellular side; the sequence is QADLKDLDGP…DQSENSSRAS (784 aa). One can recognise an EMI domain in the interval 25 to 100; that stretch reads GPNICKRREL…YIASAGECVP (76 aa). 6 disulfides stabilise this stretch: cysteine 29-cysteine 88, cysteine 55-cysteine 62, cysteine 87-cysteine 98, cysteine 102-cysteine 111, cysteine 106-cysteine 117, and cysteine 119-cysteine 128. N-linked (GlcNAc...) asparagine glycosylation is present at asparagine 73. EGF-like domains lie at 99 to 129, 137 to 172, 180 to 215, 223 to 258, 266 to 301, and 309 to 344; these read VPHC…PACD, YGRN…ARCA, FGAN…PLCD, HGAQ…DVCA, YGPG…ERCF, and YGFN…AKCA. Asparagine 140 carries N-linked (GlcNAc...) asparagine glycosylation. Disulfide bonds link cysteine 141/cysteine 153, cysteine 147/cysteine 160, and cysteine 162/cysteine 171. N-linked (GlcNAc...) asparagine glycosylation is present at asparagine 183. Disulfide bonds link cysteine 184-cysteine 196, cysteine 190-cysteine 203, cysteine 205-cysteine 214, cysteine 227-cysteine 239, cysteine 233-cysteine 246, cysteine 248-cysteine 257, cysteine 270-cysteine 282, cysteine 276-cysteine 289, and cysteine 291-cysteine 300. Residue asparagine 312 is glycosylated (N-linked (GlcNAc...) asparagine). 3 disulfides stabilise this stretch: cysteine 313–cysteine 325, cysteine 319–cysteine 332, and cysteine 334–cysteine 343. An N-linked (GlcNAc...) asparagine glycan is attached at asparagine 329. Residue asparagine 358 is glycosylated (N-linked (GlcNAc...) asparagine). EGF-like domains are found at residues 398–433 and 484–519; these read YGPN…PTCE and FGQD…ERCE. Disulfide bonds link cysteine 402–cysteine 414, cysteine 408–cysteine 421, cysteine 423–cysteine 432, cysteine 488–cysteine 500, cysteine 494–cysteine 507, and cysteine 509–cysteine 518. The N-linked (GlcNAc...) asparagine glycan is linked to asparagine 418. A glycan (N-linked (GlcNAc...) asparagine) is linked at asparagine 504. N-linked (GlcNAc...) asparagine glycans are attached at residues asparagine 540, asparagine 584, and asparagine 585. An EGF-like 9 domain is found at 572–607; that stretch reads YGENCDKVCRCLNNSSCDPDSGNCICSAGWTGADCA. 3 disulfides stabilise this stretch: cysteine 576–cysteine 588, cysteine 582–cysteine 595, and cysteine 597–cysteine 606. A glycan (N-linked (GlcNAc...) asparagine) is linked at asparagine 630. The 36-residue stretch at 660-695 folds into the EGF-like 10 domain; it reads YGPGCKLKCNCEHGGECNHVTGQCQCLPGWTGSNCN. 3 disulfide bridges follow: cysteine 664–cysteine 676, cysteine 670–cysteine 683, and cysteine 685–cysteine 694. Residues asparagine 695 and asparagine 795 are each glycosylated (N-linked (GlcNAc...) asparagine). Residues 801 to 821 form a helical membrane-spanning segment; it reads VALTLVLMTLFACIIFAVFIY. The Cytoplasmic portion of the chain corresponds to 822 to 1031; the sequence is YRRRVSNLKT…SPSSSPKFLK (210 aa). Basic and acidic residues predominate over residues 940–954; the sequence is KEGYKDPDEYDHLDY. Disordered regions lie at residues 940 to 964 and 989 to 1031; these read KEGY…QKPH and TVLL…KFLK. The segment covering 1009–1031 has biased composition (polar residues); it reads DNTNTNLDNVSTASPSSSPKFLK.

Belongs to the MEGF family. Interacts (via the cytoplasmic domain) with shark; this is required for the recruitment of drpr and glial cells to severed axons and for the phagocytosis of axonal debris by glial cells following axon injury. Interacts with ced-6. As to quaternary structure, interacts with csw; this results in dephosphorylation of drpr isoform A which is required for the inhibition of glial cell engulfment of axonal debris produced following axonal injury. Post-translationally, phosphorylated on tyrosine residues. Phosphorylation is induced by binding to prtp. It is also induced by binding to the membrane phospholipid phosphatidylserine. Phosphorylation may be mediated directly or indirectly by Src42a and is required for interaction with shark. In terms of processing, dephosphorylated by csw which is required for the inhibition of glial cell engulfment of axonal debris produced following axonal injury. As to expression, expressed in adult head (at protein level). Expressed in glia, macrophages and ectoderm (at protein level). Detected in glia around the mushroom body dorsal lobe and in glial processes infiltrating the medial lobe (at protein level). Expressed in adult brain glia including antennal lobe glia (at protein level). Expressed in the larval fat body (at protein level). Expressed in the ovary (at protein level). Isoform B: Predominant isoform in adult glia.

Its subcellular location is the cell membrane. It localises to the cell projection. The protein localises to the axon. It is found in the cytoplasm. The protein resides in the postsynaptic cell membrane. Its subcellular location is the cell cortex. It localises to the phagocytic cup. The protein localises to the cytoplasmic vesicle. It is found in the phagosome. In terms of biological role, receptor which is involved in the phagocytosis of a variety of cells including apoptotic cells, severed and pruned axons, degenerating dendrites, salivary gland cells, germline cells and bacteria. Binds to the ligand prtp which relocates from the endoplasmic reticulum to the cell surface during apoptosis. Ligand-binding may promote tyrosine phosphorylation mediated by Src42a, interaction with shark and subsequent activation of phagocytosis. Also binds to the membrane phospholipid phosphatidylserine which is exposed on the surface of apoptotic cells. Required for the phagocytosis of apoptotic cells by macrophages. Also required for the phagocytosis of apoptotic neurons by glial cells in the embryonic nervous system. Acts downstream of NimC4/simu in the glial phagocytosis of apoptotic neurons. Plays a role in the glial engulfment of larval axons as part of programmed axon pruning during metamorphosis. Also mediates glial cell clearance of severed axons following axonal injury. Required for the engulfment of degenerating dendrites by epidermal cells. Required in the ovary for the engulfment and subsequent processing of dying germline cells by follicular epithelial cells through activation of the JNK/bsk pathway. Plays a role in neuromuscular junction development by mediating the clearance of presynaptic debris and immature boutons which are shed by growing synapses. Required for larval salivary gland cell death which occurs following a rise in steroid levels after puparium formation. Also involved in bacterial phagocytosis. Required for hemocyte phagocytosis of the Gram-positive bacterium S.aureus. Lipoteichoic acid, synthesized by the S.aureus lipoteichoic acid synthase ltaS, acts as a ligand for drpr in this process. Together with Src42a and shark, promotes the migration of macrophages to sites of wounding as part of a signaling cascade where Scr42a detects production of hydrogen peroxide at wound sites which triggers phosphorylation of drpr and subsequent recruitment and activation of shark. Also required for macrophage priming which occurs following phagocytosis of apoptotic cells and ensures that macrophages develop a form of molecular memory that allows them to later mount an inflammatory response to tissue damage and bacterial infection. Is also an essential factor in the regulation of muscle development and myogenesis, and as a consequence is required for normal locomotion. Likely to control the balance between skeletal muscle satellite cells proliferation and differentiation through regulation of the notch signaling pathway. Its function is as follows. Promotes engulfment of axonal debris by glial cells following axonal injury. Potently inhibits glial cell engulfment of axonal debris produced following axonal injury. The chain is Protein draper from Drosophila melanogaster (Fruit fly).